The primary structure comprises 141 residues: Large ribosomal subunit protein uL16 (141 aa).

Residues 1-23 form a disordered region; sequence MLMPKRTKYRKQMKGRNRGKAHR.

The protein belongs to the universal ribosomal protein uL16 family. In terms of assembly, part of the 50S ribosomal subunit.

In terms of biological role, binds 23S rRNA and is also seen to make contacts with the A and possibly P site tRNAs. This Helicobacter pylori (strain J99 / ATCC 700824) (Campylobacter pylori J99) protein is Large ribosomal subunit protein uL16.